A 261-amino-acid chain; its full sequence is tRNA pseudouridine synthase A (261 aa).

Asp55 serves as the catalytic Nucleophile. Tyr114 contacts substrate.

This sequence belongs to the tRNA pseudouridine synthase TruA family. As to quaternary structure, homodimer.

The catalysed reaction is uridine(38/39/40) in tRNA = pseudouridine(38/39/40) in tRNA. Its function is as follows. Formation of pseudouridine at positions 38, 39 and 40 in the anticodon stem and loop of transfer RNAs. The polypeptide is tRNA pseudouridine synthase A (Paracoccus denitrificans (strain Pd 1222)).